A 159-amino-acid chain; its full sequence is Phosphopantetheine adenylyltransferase (159 aa).

Thr-9 serves as a coordination point for substrate. ATP-binding positions include 9 to 10 (TF) and His-17. Residues Lys-41, Leu-73, and Arg-87 each coordinate substrate. Residues 88-90 (GLR), Glu-98, and 123-129 (YMFISAT) contribute to the ATP site.

This sequence belongs to the bacterial CoaD family. In terms of assembly, homohexamer. Mg(2+) is required as a cofactor.

Its subcellular location is the cytoplasm. The catalysed reaction is (R)-4'-phosphopantetheine + ATP + H(+) = 3'-dephospho-CoA + diphosphate. Its pathway is cofactor biosynthesis; coenzyme A biosynthesis; CoA from (R)-pantothenate: step 4/5. Functionally, reversibly transfers an adenylyl group from ATP to 4'-phosphopantetheine, yielding dephospho-CoA (dPCoA) and pyrophosphate. The sequence is that of Phosphopantetheine adenylyltransferase from Nitrosomonas europaea (strain ATCC 19718 / CIP 103999 / KCTC 2705 / NBRC 14298).